The following is a 348-amino-acid chain: tRNA pseudouridine synthase D (348 aa).

Position 27 (Phe-27) interacts with substrate. Asp-80 serves as the catalytic Nucleophile. Residue Asn-129 participates in substrate binding. The TRUD domain occupies 155-303; it reads GVPNYFGSQR…VEPARRAVLL (149 aa). Phe-329 is a binding site for substrate.

This sequence belongs to the pseudouridine synthase TruD family.

It carries out the reaction uridine(13) in tRNA = pseudouridine(13) in tRNA. In terms of biological role, responsible for synthesis of pseudouridine from uracil-13 in transfer RNAs. The chain is tRNA pseudouridine synthase D from Pectobacterium atrosepticum (strain SCRI 1043 / ATCC BAA-672) (Erwinia carotovora subsp. atroseptica).